The chain runs to 38 residues: Large ribosomal subunit protein bL36A (38 aa).

The protein belongs to the bacterial ribosomal protein bL36 family.

The chain is Large ribosomal subunit protein bL36A from Pectobacterium atrosepticum (strain SCRI 1043 / ATCC BAA-672) (Erwinia carotovora subsp. atroseptica).